The chain runs to 1420 residues: Mediator of RNA polymerase II transcription subunit 13 (1420 aa).

Serine 370, serine 375, and serine 425 each carry phosphoserine. A compositionally biased stretch (polar residues) spans 416–427 (TTVSNDLENSPL). The segment at 416–511 (TTVSNDLENS…TNESNKSISD (96 aa)) is disordered. The segment covering 429–439 (TELEANGRSLE) has biased composition (basic and acidic residues). A compositionally biased stretch (polar residues) spans 440 to 453 (KVNNSVSKTGSVDT). Residues 454-484 (LHNKEGTLEQREQNENLPSDKSDSMVDKELF) show a composition bias toward basic and acidic residues. Residues 494 to 508 (GDSNKSNSTNESNKS) show a composition bias toward low complexity. At threonine 601 the chain carries Phosphothreonine. At serine 608 the chain carries Phosphoserine; by PKA. Phosphoserine is present on serine 636. The tract at residues 653–691 (LSSSEEEEDEEENGSSDEDLKSLNVRDDMKPSDNISTNT) is disordered. Over residues 655-669 (SSEEEEDEEENGSSD) the composition is skewed to acidic residues. The span at 670–683 (EDLKSLNVRDDMKP) shows a compositional bias: basic and acidic residues. The residue at position 748 (serine 748) is a Phosphoserine.

This sequence belongs to the Mediator complex subunit 13 family. Component of the SRB8-11 complex which consists of SRB8, SSN2/SRB9, SSN3/SRB10 and SSN8/SRB11. The SRB8-11 complex associates with the Mediator complex. The SSN3/SRB10 and SSN8/SRB11 kinase-cyclin pair also associate with the RNA polymerase II holoenzyme. Post-translationally, phosphorylated. PKA-dependent phosphorylation at 'Ser-608' is enhanced by activation of the RAS signaling pathway.

The protein resides in the nucleus. In terms of biological role, component of the SRB8-11 complex. The SRB8-11 complex is a regulatory module of the Mediator complex which is itself involved in regulation of basal and activated RNA polymerase II-dependent transcription. The SRB8-11 complex may be involved in the transcriptional repression of a subset of genes regulated by Mediator. It may inhibit the association of the Mediator complex with RNA polymerase II to form the holoenzyme complex. The SRB8-11 complex phosphorylates the C-terminal domain (CTD) of the largest subunit of RNA polymerase II RPB1 at serines 2 and 5. This is Mediator of RNA polymerase II transcription subunit 13 (SSN2) from Saccharomyces cerevisiae (strain ATCC 204508 / S288c) (Baker's yeast).